The sequence spans 380 residues: Succinyl-diaminopimelate desuccinylase (380 aa).

Histidine 70 is a binding site for Zn(2+). Aspartate 72 is a catalytic residue. Aspartate 103 serves as a coordination point for Zn(2+). Glutamate 137 acts as the Proton acceptor in catalysis. Glutamate 138, glutamate 166, and histidine 352 together coordinate Zn(2+).

It belongs to the peptidase M20A family. DapE subfamily. In terms of assembly, homodimer. Zn(2+) is required as a cofactor. It depends on Co(2+) as a cofactor.

It catalyses the reaction N-succinyl-(2S,6S)-2,6-diaminopimelate + H2O = (2S,6S)-2,6-diaminopimelate + succinate. Its pathway is amino-acid biosynthesis; L-lysine biosynthesis via DAP pathway; LL-2,6-diaminopimelate from (S)-tetrahydrodipicolinate (succinylase route): step 3/3. Its function is as follows. Catalyzes the hydrolysis of N-succinyl-L,L-diaminopimelic acid (SDAP), forming succinate and LL-2,6-diaminopimelate (DAP), an intermediate involved in the bacterial biosynthesis of lysine and meso-diaminopimelic acid, an essential component of bacterial cell walls. The sequence is that of Succinyl-diaminopimelate desuccinylase from Azoarcus sp. (strain BH72).